Here is a 325-residue protein sequence, read N- to C-terminus: Beta-lactamase 1 (325 aa).

The first 26 residues, Met1–Gly26, serve as a signal peptide directing secretion. The disordered stretch occupies residues Gly30–Ala50. Catalysis depends on Ser93, which acts as the Acyl-ester intermediate. A substrate-binding site is contributed by Lys270 to Gly272.

This sequence belongs to the class-A beta-lactamase family.

The enzyme catalyses a beta-lactam + H2O = a substituted beta-amino acid. The protein is Beta-lactamase 1 (blaL) of Streptomyces cacaoi.